The chain runs to 395 residues: GPI-anchor transamidase (395 aa).

The signal sequence occupies residues M1–A27. Residues S28 to G368 are Lumenal-facing. Positions 79, 82, 118, and 120 each coordinate Ca(2+). H164 (proton donor) is an active-site residue. C206 (nucleophile; acyl-thioester intermediate) is an active-site residue. C206, S232, and S234 together coordinate a protein. The tract at residues D231–Q236 is autoinhibitory loop. A disulfide bridge links C275 with C280. A helical membrane pass occupies residues G369–T385. At Y386–F395 the chain is on the cytoplasmic side.

The protein belongs to the peptidase C13 family. As to quaternary structure, heteropentamer. Part of the GPI-anchor transamidase complex, consisting of PIGK, PIGT, PIGS, PIGU and GAA1. Interacts with GPAA1. Interacts with PIGT; this interaction, via a disulfide link, stabilizes the expression of GAA1 and PIGK and links them to PIGS. Post-translationally, the disulfide bond between PIGK/GPI8 and PIGT is important for normal enzyme activity.

The protein localises to the endoplasmic reticulum membrane. The protein operates within glycolipid biosynthesis; glycosylphosphatidylinositol-anchor biosynthesis. Its activity is regulated as follows. In the absence of proproteins substrates, exists in an inactive state with a disrupted catalytic site by an autoinhibitory loop. The binding of proprotein substrates, particularly the CSP region, to GPI-T triggers concerted conformational changes that alleviate the inhibition by the autoinhibitory loop. Meanwhile, proprotein residues near the omega- site induce the formation of a catalytic cleft for catalysis, following which the products are released and GPI-T reverts to the inactive state. Its function is as follows. Catalytic subunit of the glycosylphosphatidylinositol-anchor (GPI-anchor) transamidase (GPI-T) complex that catalyzes the formation of the linkage between a proprotein and a GPI-anchor and participates in GPI anchored protein biosynthesis. Recognizes diverse proproteins at a C-terminal signal peptide (CSP) region that lacks consensus sequence and replaces it with a GPI-anchor via a transamidation reaction. Transamidation catalysis reaction follows a two-phase mechanism. In the acyl-enzyme phase, the carbonyl group of the proproteins's omega-site undergoes a nucleophilic attack forming an enzyme-substrate thioester bond. Followed by a general acid catalysis that allows CSP releasing, regenerating the carbonyl, and forming the acyl-enzyme intermediate. In the GPI-anchor attachment phase, the amino group of the GPI-anchor's ethanolamine phosphate, the one on third mannose (EtNP3), mediates a nucleophilic attack on the carbonyl of the acyl-enzyme intermediate, replacing the CSP, allowing GPI-anchor attachment to the omega-residue, therefore forming the product and freeing the enzyme. This is GPI-anchor transamidase from Sus scrofa (Pig).